The sequence spans 146 residues: MAPKKKVSGFIKLQIQAGQANPAPPVGPALGAHGVNIMEFCKAYNAATEDQRGNVVPVEITVYEDRSFTFKLKTPPAAKLLLKAANLQKGSGEPNTNKVGSVTWDQCKEIAQTKMEDLNANDLDMGARIIAGTARSMGIEVKGATA.

The protein belongs to the universal ribosomal protein uL11 family. Part of the ribosomal stalk of the 50S ribosomal subunit. Interacts with L10 and the large rRNA to form the base of the stalk. L10 forms an elongated spine to which L12 dimers bind in a sequential fashion forming a multimeric L10(L12)X complex. In terms of processing, one or more lysine residues are methylated.

Its function is as follows. Forms part of the ribosomal stalk which helps the ribosome interact with GTP-bound translation factors. The protein is Large ribosomal subunit protein uL11 of Corynebacterium kroppenstedtii (strain DSM 44385 / JCM 11950 / CIP 105744 / CCUG 35717).